The following is a 299-amino-acid chain: Zeta-sarcoglycan (299 aa).

Residues 1 to 37 (MTREQYILATQQNNLPRTENAQLYPVGIYGWRKRCLY) are Cytoplasmic-facing. A helical; Signal-anchor for type II membrane protein membrane pass occupies residues 38 to 58 (FFVLLLLVTMIVNLAMTIWIL). At 59 to 299 (KVMNFTVDGM…QSSSNICLWS (241 aa)) the chain is on the extracellular side. 2 N-linked (GlcNAc...) asparagine glycosylation sites follow: Asn-62 and Asn-110. A disulfide bond links Cys-273 and Cys-289.

Belongs to the sarcoglycan beta/delta/gamma/zeta family.

The protein localises to the cell membrane. It is found in the sarcolemma. Its subcellular location is the cytoplasm. The protein resides in the cytoskeleton. Its function is as follows. Component of the sarcoglycan complex, a subcomplex of the dystrophin-glycoprotein complex which forms a link between the F-actin cytoskeleton and the extracellular matrix. May play a role in the maintenance of striated muscle membrane stability. The sequence is that of Zeta-sarcoglycan (SGCZ) from Homo sapiens (Human).